Reading from the N-terminus, the 303-residue chain is N-acetyl-D-glucosamine kinase (303 aa).

ATP is bound by residues 4–11 and 133–140; these read GFDIGGTK and GVGGGLVL. Residues His-157, Cys-177, Cys-179, and Cys-184 each coordinate Zn(2+).

It belongs to the ROK (NagC/XylR) family. NagK subfamily.

The catalysed reaction is N-acetyl-D-glucosamine + ATP = N-acetyl-D-glucosamine 6-phosphate + ADP + H(+). Its pathway is cell wall biogenesis; peptidoglycan recycling. Its function is as follows. Catalyzes the phosphorylation of N-acetyl-D-glucosamine (GlcNAc) derived from cell-wall degradation, yielding GlcNAc-6-P. This chain is N-acetyl-D-glucosamine kinase, found in Salmonella paratyphi B (strain ATCC BAA-1250 / SPB7).